The primary structure comprises 556 residues: Arginine--tRNA ligase (556 aa).

The short motif at 132-142 is the 'HIGH' region element; it reads ANPTGNLHLGH.

This sequence belongs to the class-I aminoacyl-tRNA synthetase family. In terms of assembly, monomer.

The protein resides in the cytoplasm. It catalyses the reaction tRNA(Arg) + L-arginine + ATP = L-arginyl-tRNA(Arg) + AMP + diphosphate. In Bacillus licheniformis (strain ATCC 14580 / DSM 13 / JCM 2505 / CCUG 7422 / NBRC 12200 / NCIMB 9375 / NCTC 10341 / NRRL NRS-1264 / Gibson 46), this protein is Arginine--tRNA ligase.